An 853-amino-acid chain; its full sequence is Protein translocase subunit SecA 1 (853 aa).

ATP contacts are provided by residues Gln-85, 103–107 (GEGKT), and Asp-492.

This sequence belongs to the SecA family. Monomer and homodimer. Part of the essential Sec protein translocation apparatus which comprises SecA, SecYEG and auxiliary proteins SecDF. Other proteins may also be involved.

It localises to the cell membrane. It is found in the cytoplasm. The enzyme catalyses ATP + H2O + cellular proteinSide 1 = ADP + phosphate + cellular proteinSide 2.. Its function is as follows. Part of the Sec protein translocase complex. Interacts with the SecYEG preprotein conducting channel. Has a central role in coupling the hydrolysis of ATP to the transfer of proteins into and across the cell membrane, serving as an ATP-driven molecular motor driving the stepwise translocation of polypeptide chains across the membrane. The protein is Protein translocase subunit SecA 1 of Corynebacterium diphtheriae (strain ATCC 700971 / NCTC 13129 / Biotype gravis).